We begin with the raw amino-acid sequence, 289 residues long: Serine/threonine-protein phosphatase Pgam5, mitochondrial (289 aa).

Residues 7–23 (FACGTGAGLAAYYLQRL) traverse the membrane as a helical segment.

The protein belongs to the phosphoglycerate mutase family. BPG-dependent PGAM subfamily. As to quaternary structure, interacts with Pk92B/ASK1.

It localises to the mitochondrion outer membrane. It carries out the reaction O-phospho-L-seryl-[protein] + H2O = L-seryl-[protein] + phosphate. It catalyses the reaction O-phospho-L-threonyl-[protein] + H2O = L-threonyl-[protein] + phosphate. Functionally, displays phosphatase activity for serine/threonine residues, and dephosphorylates and activates Pk92B kinase. Has apparently no phosphoglycerate mutase activity. This Drosophila simulans (Fruit fly) protein is Serine/threonine-protein phosphatase Pgam5, mitochondrial.